A 436-amino-acid chain; its full sequence is AMSH-like protease (436 aa).

Met1 carries the post-translational modification N-acetylmethionine. 2 positions are modified to phosphoserine: Ser25 and Ser242. An MPN domain is found at 269 to 397 (VVLPEDLCHK…IFRLTNAGML (129 aa)). Zn(2+) is bound by residues His347, His349, Asp360, His362, Cys402, His408, and His410. Residues 347–360 (HTHPTQTAFLSSVD) carry the JAMM motif motif.

Belongs to the peptidase M67C family. Requires Zn(2+) as cofactor. As to expression, ubiquitously expressed.

Its activity is regulated as follows. Inhibited by UbV(SP.1), an ubiquitin variant that also inhibits STAMBP. Its function is as follows. Zinc metalloprotease that specifically cleaves 'Lys-63'-linked polyubiquitin chains. Acts as a positive regulator of the TORC1 signaling pathway by mediating 'Lys-63'-linked deubiquitination of SESN2, thereby inhibiting SESN2-interaction with the GATOR2 complex. Does not cleave 'Lys-48'-linked polyubiquitin chains. This chain is AMSH-like protease, found in Homo sapiens (Human).